Here is a 436-residue protein sequence, read N- to C-terminus: Acrosin (436 aa).

Positions Met1–Ala19 are cleaved as a signal peptide. Asn22 carries N-linked (GlcNAc...) asparagine glycosylation. Intrachain disulfides connect Cys25/Cys155, Cys29/Cys163, Cys74/Cys90, Cys178/Cys247, Cys210/Cys226, and Cys237/Cys267. Residues Ile43–Gly291 form the Peptidase S1 domain. Active-site charge relay system residues include His89 and Asp143. An N-linked (GlcNAc...) asparagine glycan is attached at Asn211. Ser241 (charge relay system) is an active-site residue. The propeptide at Pro346–Ser436 is pro-rich.

The protein belongs to the peptidase S1 family. As to quaternary structure, heavy chain (catalytic) and a light chain linked by two disulfide bonds. Forms a heterodimer with SERPINA5.

The enzyme catalyses Preferential cleavage: Arg-|-Xaa, Lys-|-Xaa.. With respect to regulation, inhibited by SERPINA5. Functionally, acrosin is the major protease of mammalian spermatozoa. It is a serine protease of trypsin-like cleavage specificity, it is synthesized in a zymogen form, proacrosin and stored in the acrosome. This is Acrosin (Acr) from Mus musculus (Mouse).